A 145-amino-acid polypeptide reads, in one-letter code: Class I hydrophobin rodE (145 aa).

4 disulfides stabilise this stretch: cysteine 43-cysteine 126, cysteine 59-cysteine 120, cysteine 60-cysteine 95, and cysteine 127-cysteine 140.

The protein belongs to the fungal hydrophobin family. In terms of assembly, self-assembles to form functional amyloid fibrils called rodlets. Self-assembly into fibrillar rodlets occurs spontaneously at hydrophobic:hydrophilic interfaces and the rodlets further associate laterally to form amphipathic monolayers.

Its function is as follows. Aerial growth, conidiation, and dispersal of filamentous fungi in the environment rely upon a capability of their secreting small amphipathic proteins called hydrophobins (HPBs) with low sequence identity. Class I can self-assemble into an outermost layer of rodlet bundles on aerial cell surfaces, conferring cellular hydrophobicity that supports fungal growth, development and dispersal; whereas Class II form highly ordered films at water-air interfaces through intermolecular interactions but contribute nothing to the rodlet structure. RodE is a class I hydrophobin that, unlike rodA, is not required for rodlet formation. In Aspergillus fumigatus (strain ATCC MYA-4609 / CBS 101355 / FGSC A1100 / Af293) (Neosartorya fumigata), this protein is Class I hydrophobin rodE.